A 343-amino-acid chain; its full sequence is S-adenosylmethionine:tRNA ribosyltransferase-isomerase (343 aa).

The protein belongs to the QueA family. As to quaternary structure, monomer.

Its subcellular location is the cytoplasm. It carries out the reaction 7-aminomethyl-7-carbaguanosine(34) in tRNA + S-adenosyl-L-methionine = epoxyqueuosine(34) in tRNA + adenine + L-methionine + 2 H(+). It participates in tRNA modification; tRNA-queuosine biosynthesis. In terms of biological role, transfers and isomerizes the ribose moiety from AdoMet to the 7-aminomethyl group of 7-deazaguanine (preQ1-tRNA) to give epoxyqueuosine (oQ-tRNA). The sequence is that of S-adenosylmethionine:tRNA ribosyltransferase-isomerase from Geotalea uraniireducens (strain Rf4) (Geobacter uraniireducens).